Consider the following 1014-residue polypeptide: Regulator of telomere elongation helicase 1 homolog (1014 aa).

Positions 7-324 (AGIPVHFPFE…KEMLLELEKA (318 aa)) constitute a Helicase ATP-binding domain. 42-49 (SPTGTGKT) is an ATP binding site. [4Fe-4S] cluster is bound by residues Cys-147, Cys-165, Cys-174, and Cys-210. The short motif at 253 to 256 (DEAH) is the DEAH box element. At Thr-873 the chain carries Phosphothreonine. Residues 891–917 (TDMVKTEPGTSNSCSYGNTSSSGSDSR) are disordered. Residues 899 to 917 (GTSNSCSYGNTSSSGSDSR) are compositionally biased toward low complexity.

Belongs to the helicase family. RAD3/XPD subfamily.

It is found in the nucleus. It carries out the reaction ATP + H2O = ADP + phosphate + H(+). A probable ATP-dependent DNA helicase implicated in DNA repair and the maintenance of genomic stability. Acts as an anti-recombinase to counteract toxic recombination and limit crossover during meiosis. Regulates meiotic recombination and crossover homeostasis by physically dissociating strand invasion events and thereby promotes noncrossover repair by meiotic synthesis dependent strand annealing (SDSA) as well as disassembly of D loop recombination intermediates. This chain is Regulator of telomere elongation helicase 1 homolog, found in Drosophila mojavensis (Fruit fly).